The chain runs to 1007 residues: MGLFHHSTLFLPLLRRSNEGPHGEMPIGHYTRLSEIGRGSFAVVYKGVHTRSRTYVAIKSVTMTKLSRKLKENLASEISILKQLHHPHIVALLDCHDTTSNIHLVMEFCALGDLSHFIKGRNTLQDSPYTRELIAKYPNPGEGAGLNEVIVRHFLKQLSSALRFLRDRDLIHRDIKPQNLLLCPAPSSYRSGAADVVPFKSSEDSFSPKTGLESLPMLKLADFGFARSLPATSLAETLCGSPLYMAPEILRYEKYDAKADLWSVGTVLYEMVVGRAPFRAVNHIELIKKIEQNKDQISFPSKNRVSEDIRELIRGLLKQHPMDRMNFDVYFAHKVLTEPIPGLVADDAPLGRSPADPTPRPGSGSRRSTPVQMKRENALSGGVRDEPATYPAAQRAMTQSPRPETPSTPMRRTGSAGTPHAAPNEPTPPASHPTRPSPVSLATAPGRQEHVDRPPTTTVVEQQRRRTASSGVPQVDKPVEKAKDEKEHAAQEVAFERDYVLVEKRAVEMNAFADELAYNPRMQGGQAGAVSRRSGAAPGTPPAGGSSPHASPSKAMQIISGRSRADSAHVRQNSYDRRYGQSPTSATSAISKALNMASGRLFGMSFSPPLTITKGGRSPPLAYNPFPAYPSAQTSLIVHADGGKPGANLDEDSKTVHDLEECATRSDVVYGFAEVKYKQLIPLAPSAATGYPGDPGSDAVDSADGGLTVDAIVTLSEEALVLYVKALSLLAKSMDIARVWWTRKSRGDTLSRADTGSTVAGNRINNVVQWVRNRFNEVLEKAEFVRLKLVEAQKRLPSDHPSHPSNLSVGSSLGSGTSADVVVSPDVTAEKLMYERALEMSRVAAINEITGEDLAGCEISYVTAIRMLEAILDDVEVSRPGQSGGADRADARRDNEDGGQNEPQAVILAKSANAWHSDIENPESPGVAPEEAGAAVESVHAPVQWTGQNAAVESGASLPCSGSHAAEIRTLTVRSMQDHAHFAPLLFSIFISSYSSSISCPSSCGHC.

Residues 30 to 336 (YTRLSEIGRG…FDVYFAHKVL (307 aa)) enclose the Protein kinase domain. Residues 36-44 (IGRGSFAVV) and lysine 59 contribute to the ATP site. The active-site Proton acceptor is aspartate 174. 4 disordered regions span residues 343–489 (LVAD…KEHA), 524–586 (GGQA…PTSA), 795–817 (RLPSDHPSHPSNLSVGSSLGSGT), and 878–900 (SRPGQSGGADRADARRDNEDGGQ). The segment covering 373–387 (MKRENALSGGVRDEP) has biased composition (basic and acidic residues). Polar residues predominate over residues 396-410 (AMTQSPRPETPSTPM). Residues 477-489 (KPVEKAKDEKEHA) show a composition bias toward basic and acidic residues. Over residues 534–555 (SGAAPGTPPAGGSSPHASPSKA) the composition is skewed to low complexity. Residues 563–579 (SRADSAHVRQNSYDRRY) are compositionally biased toward basic and acidic residues. Over residues 805 to 817 (SNLSVGSSLGSGT) the composition is skewed to low complexity. Basic and acidic residues predominate over residues 887 to 896 (DRADARRDNE).

It belongs to the protein kinase superfamily. Ser/Thr protein kinase family. APG1/unc-51/ULK1 subfamily. As to quaternary structure, homodimer. Forms a ternary complex with ATG13 and ATG17.

It is found in the cytoplasm. It localises to the preautophagosomal structure membrane. The enzyme catalyses L-seryl-[protein] + ATP = O-phospho-L-seryl-[protein] + ADP + H(+). It carries out the reaction L-threonyl-[protein] + ATP = O-phospho-L-threonyl-[protein] + ADP + H(+). In terms of biological role, serine/threonine protein kinase involved in the cytoplasm to vacuole transport (Cvt) and found to be essential in autophagy, where it is required for the formation of autophagosomes. Involved in the clearance of protein aggregates which cannot be efficiently cleared by the proteasome. Required for selective autophagic degradation of the nucleus (nucleophagy) as well as for mitophagy which contributes to regulate mitochondrial quantity and quality by eliminating the mitochondria to a basal level to fulfill cellular energy requirements and preventing excess ROS production. Also involved in endoplasmic reticulum-specific autophagic process, in selective removal of ER-associated degradation (ERAD) substrates. Plays a key role in ATG9 and ATG23 cycling through the pre-autophagosomal structure and is necessary to promote ATG18 binding to ATG9 through phosphorylation of ATG9. Catalyzes phosphorylation of ATG4, decreasing the interaction between ATG4 and ATG8 and impairing deconjugation of PE-conjugated forms of ATG8. The chain is Serine/threonine-protein kinase atg1 from Aspergillus niger (strain ATCC MYA-4892 / CBS 513.88 / FGSC A1513).